The sequence spans 389 residues: 3-ketoacyl-CoA thiolase (389 aa).

Catalysis depends on Cys-91, which acts as the Acyl-thioester intermediate. Active-site proton acceptor residues include His-343 and Cys-373.

Belongs to the thiolase-like superfamily. Thiolase family. As to quaternary structure, heterotetramer of two alpha chains (FadB) and two beta chains (FadA).

Its subcellular location is the cytoplasm. The enzyme catalyses an acyl-CoA + acetyl-CoA = a 3-oxoacyl-CoA + CoA. Its pathway is lipid metabolism; fatty acid beta-oxidation. In terms of biological role, catalyzes the final step of fatty acid oxidation in which acetyl-CoA is released and the CoA ester of a fatty acid two carbons shorter is formed. This Citrobacter koseri (strain ATCC BAA-895 / CDC 4225-83 / SGSC4696) protein is 3-ketoacyl-CoA thiolase.